The following is a 997-amino-acid chain: Glutamate [NMDA] receptor subunit 1 (997 aa).

A signal peptide spans 1 to 26 (MAVAEFVFCWPLFELAIVLLVAPIHA). The Extracellular portion of the chain corresponds to 27–573 (AQRHTASDNP…TLVSFLQPFS (547 aa)). 7 N-linked (GlcNAc...) asparagine glycosylation sites follow: N258, N314, N345, N397, N454, N481, and N501. Glycine contacts are provided by residues 530 to 532 (PLT) and R537. A helical membrane pass occupies residues 574 to 594 (NTLWILVMVSVHVVALVLYLL). Topologically, residues 595–651 (DRFSPFGRFKLSHSDSNEEKALNLSSAVWFAWGVLLNSGIGEGTPRSFSARVLGMVW) are cytoplasmic. A helical transmembrane segment spans residues 652 to 672 (AGFAMIIVASYTANLAAFLVL). Over 673–831 (ERPKTKLSGI…KTPNTLGLKN (159 aa)) the chain is Extracellular. N-linked (GlcNAc...) asparagine glycosylation is present at N693. 2 residues coordinate glycine: S703 and D747. Residues 832–852 (MAGVFILVGVGIAGGVGLIII) traverse the membrane as a helical segment. Residues 853–997 (EVIYKKHQVK…YTSDVSHLVV (145 aa)) are Cytoplasmic-facing. The interval 947-997 (ELGKPGQSPKVMSANQPGMPMPMLGKTRPQQSVLPPRYSPGYTSDVSHLVV) is disordered. Residues 987–997 (GYTSDVSHLVV) are compositionally biased toward polar residues.

Belongs to the glutamate-gated ion channel (TC 1.A.10.1) family. In terms of assembly, forms a heteromeric NMDA channel with Nmdar2.

The protein localises to the cell membrane. It is found in the postsynaptic cell membrane. Its subcellular location is the postsynaptic density. In terms of biological role, NMDA receptor subtype of glutamate-gated ion channels with high calcium permeability and voltage-dependent sensitivity to magnesium. Mediated by glycine. This protein plays a key role in synaptic plasticity, synaptogenesis, excitotoxicity, memory acquisition and learning. It mediates neuronal functions in glutamate neurotransmission. Is involved in the cell surface targeting of NMDA receptors. Plays a role in associative learning and in long-term memory consolidation. This is Glutamate [NMDA] receptor subunit 1 from Drosophila erecta (Fruit fly).